The primary structure comprises 284 residues: Bifunctional protein FolD (284 aa).

Residues 165–167 and Ser-190 contribute to the NADP(+) site; that span reads GRS.

The protein belongs to the tetrahydrofolate dehydrogenase/cyclohydrolase family. Homodimer.

The catalysed reaction is (6R)-5,10-methylene-5,6,7,8-tetrahydrofolate + NADP(+) = (6R)-5,10-methenyltetrahydrofolate + NADPH. The enzyme catalyses (6R)-5,10-methenyltetrahydrofolate + H2O = (6R)-10-formyltetrahydrofolate + H(+). The protein operates within one-carbon metabolism; tetrahydrofolate interconversion. In terms of biological role, catalyzes the oxidation of 5,10-methylenetetrahydrofolate to 5,10-methenyltetrahydrofolate and then the hydrolysis of 5,10-methenyltetrahydrofolate to 10-formyltetrahydrofolate. The protein is Bifunctional protein FolD of Streptococcus equi subsp. zooepidemicus (strain MGCS10565).